A 136-amino-acid polypeptide reads, in one-letter code: Large ribosomal subunit protein uL16 (136 aa).

It belongs to the universal ribosomal protein uL16 family. As to quaternary structure, part of the 50S ribosomal subunit.

Binds 23S rRNA and is also seen to make contacts with the A and possibly P site tRNAs. The sequence is that of Large ribosomal subunit protein uL16 from Enterobacter sp. (strain 638).